The primary structure comprises 643 residues: Threonine--tRNA ligase (643 aa).

Residues 1-61 form the TGS domain; it reads MPIITLPDGS…TEDSTLEIIT (61 aa). Residues 243-534 form a catalytic region; that stretch reads DHRKIGKALD…ITEEYAGFFP (292 aa). Zn(2+) is bound by residues C334, H385, and H511.

It belongs to the class-II aminoacyl-tRNA synthetase family. In terms of assembly, homodimer. Requires Zn(2+) as cofactor.

The protein resides in the cytoplasm. It catalyses the reaction tRNA(Thr) + L-threonine + ATP = L-threonyl-tRNA(Thr) + AMP + diphosphate + H(+). Catalyzes the attachment of threonine to tRNA(Thr) in a two-step reaction: L-threonine is first activated by ATP to form Thr-AMP and then transferred to the acceptor end of tRNA(Thr). Also edits incorrectly charged L-seryl-tRNA(Thr). The sequence is that of Threonine--tRNA ligase from Mannheimia succiniciproducens (strain KCTC 0769BP / MBEL55E).